Reading from the N-terminus, the 289-residue chain is DegV domain-containing protein YteA (289 aa).

Residues 3 to 284 (FQIMTDSTAD…DGTIAIFSIS (282 aa)) enclose the DegV domain. 2 residues coordinate hexadecanoate: Thr-62 and Ser-94.

Its function is as follows. May bind long-chain fatty acids, such as palmitate, and may play a role in lipid transport or fatty acid metabolism. The sequence is that of DegV domain-containing protein YteA (yteA) from Lactococcus lactis subsp. lactis (strain IL1403) (Streptococcus lactis).